The primary structure comprises 205 residues: Large ribosomal subunit protein uL4 (205 aa).

The disordered stretch occupies residues 43-77 (RRRSGTASTKGRSDVAGSRAKLFRQKGTGRARRGD). Positions 63-73 (KLFRQKGTGRA) are enriched in basic residues.

This sequence belongs to the universal ribosomal protein uL4 family. As to quaternary structure, part of the 50S ribosomal subunit.

One of the primary rRNA binding proteins, this protein initially binds near the 5'-end of the 23S rRNA. It is important during the early stages of 50S assembly. It makes multiple contacts with different domains of the 23S rRNA in the assembled 50S subunit and ribosome. In terms of biological role, forms part of the polypeptide exit tunnel. In Desulfosudis oleivorans (strain DSM 6200 / JCM 39069 / Hxd3) (Desulfococcus oleovorans), this protein is Large ribosomal subunit protein uL4.